The following is a 289-amino-acid chain: MQNRTLPYFLILPSLLLAAVVIFWPVVHLFEIATHDVNRFGQLREFNDGANFTALFATAEFMNALWRTAVWTVAVVGGALVLSIPVAIILNMDFYGRSVARVIIMLPWAVSLTMTAIFWRWALNGESGMLNSALHGLGLIDTNIQWLASAATAFPMQILVGILVTVPFTTTIFLGGLSSIPDDLYEASSLEGASLWQQFREITFPLLKPFVNIAIVLNTIYVFNSFPIIWVMTQGRPANSTDILVTHLYKLAFRLGKFGEASAVSLIMLAILLVFTVIYIRISTRSEQS.

6 helical membrane passes run F9–L29, V70–L90, V99–W119, I144–V166, I213–T233, and F258–I278. Positions L65 to Y279 constitute an ABC transmembrane type-1 domain.

The protein belongs to the binding-protein-dependent transport system permease family. As to quaternary structure, the complex is composed of two ATP-binding proteins (BruAb2_0487), two transmembrane proteins (BruAb2_0483) and a solute-binding protein (BruAb2_0484).

It localises to the cell inner membrane. In terms of biological role, probably part of an ABC transporter complex. Probably responsible for the translocation of the substrate across the membrane. The polypeptide is Probable ABC transporter permease protein BruAb2_0483 (Brucella abortus biovar 1 (strain 9-941)).